A 215-amino-acid chain; its full sequence is Glutathione S-transferase D6 (215 aa).

Positions 1 to 80 (MDLYNMSGSP…YLVEQYGKDD (80 aa)) constitute a GST N-terminal domain. Glutathione is bound by residues Ser-9, 50-52 (HTI), and 64-66 (ETR). In terms of domain architecture, GST C-terminal spans 86–206 (DPQKQALINQ…LARIQSAKKF (121 aa)).

This sequence belongs to the GST superfamily. Delta family. Homodimer.

The catalysed reaction is RX + glutathione = an S-substituted glutathione + a halide anion + H(+). Functionally, conjugation of reduced glutathione to a wide number of exogenous and endogenous hydrophobic electrophiles. May be involved in detoxification. The chain is Glutathione S-transferase D6 from Drosophila melanogaster (Fruit fly).